A 458-amino-acid chain; its full sequence is Argininosuccinate lyase (458 aa).

The protein belongs to the lyase 1 family. Argininosuccinate lyase subfamily.

Its subcellular location is the cytoplasm. It catalyses the reaction 2-(N(omega)-L-arginino)succinate = fumarate + L-arginine. The protein operates within amino-acid biosynthesis; L-arginine biosynthesis; L-arginine from L-ornithine and carbamoyl phosphate: step 3/3. The protein is Argininosuccinate lyase of Salmonella agona (strain SL483).